A 764-amino-acid polypeptide reads, in one-letter code: Protein FAR1-RELATED SEQUENCE 7 (764 aa).

Residues 42 to 118 (DYYNSYATRT…QKEHNHDLGG (77 aa)) form the FAR1 1 domain. The disordered stretch occupies residues 119-144 (HIEEAQTTPRPSVQQRAPAPTKLGIS). Residues 123 to 133 (AQTTPRPSVQQ) are compositionally biased toward polar residues. Positions 204–280 (QFYQAYAEVV…NKDHNHDLEP (77 aa)) constitute an FAR1 2 domain. Residues 375–471 (AVVFDTSYRK…SAWQIRSKER (97 aa)) form the MULE domain. An SWIM-type zinc finger spans residues 650-686 (HAVTFSASNLNASCSCQMFEYEGLLCRHILKVFNLLD).

This sequence belongs to the FHY3/FAR1 family. In terms of tissue distribution, expressed in hypocotyls, rosette and cauline leaves, inflorescences stems, flowers and siliques.

It is found in the nucleus. Its function is as follows. Putative transcription activator involved in regulating light control of development. This Arabidopsis thaliana (Mouse-ear cress) protein is Protein FAR1-RELATED SEQUENCE 7 (FRS7).